Reading from the N-terminus, the 468-residue chain is Probable 1,4-beta-D-glucan cellobiohydrolase C (468 aa).

The first 18 residues, 1–18 (MGRVSSLALALLLPAVQA), serve as a signal peptide directing secretion. The CBM1 domain maps to 19–54 (QQTLWGQCGGIGWTGPTNCVAGAACSTQNPYYAQCL). 2 disulfide bridges follow: Cys-26–Cys-43 and Cys-37–Cys-53. A thr-rich linker region spans residues 57–106 (TATTSTTLTTTTRVTTTTTSTTSKSSSTGSTTTTKSTGTTTTSGSSTTIT). The disordered stretch occupies residues 68–107 (TRVTTTTTSTTSKSSSTGSTTTTKSTGTTTTSGSSTTITS). Positions 107-468 (SAPSGNPFSG…QLLKNANPAF (362 aa)) are catalytic. The active site involves Asp-198. Cystine bridges form between Cys-199/Cys-258 and Cys-390/Cys-437. The active-site Proton donor is Asp-244. The active-site Nucleophile is Asp-423.

Belongs to the glycosyl hydrolase 6 (cellulase B) family.

The protein resides in the secreted. It catalyses the reaction Hydrolysis of (1-&gt;4)-beta-D-glucosidic linkages in cellulose and cellotetraose, releasing cellobiose from the non-reducing ends of the chains.. Functionally, the biological conversion of cellulose to glucose generally requires three types of hydrolytic enzymes: (1) Endoglucanases which cut internal beta-1,4-glucosidic bonds; (2) Exocellobiohydrolases that cut the disaccharide cellobiose from the non-reducing end of the cellulose polymer chain; (3) Beta-1,4-glucosidases which hydrolyze the cellobiose and other short cello-oligosaccharides to glucose. The protein is Probable 1,4-beta-D-glucan cellobiohydrolase C (cbhC) of Aspergillus terreus (strain NIH 2624 / FGSC A1156).